We begin with the raw amino-acid sequence, 451 residues long: Bifunctional protein GlmU (451 aa).

Positions 1 to 225 are pyrophosphorylase; the sequence is MVVVAILAAG…YQEILGINDR (225 aa). Residues 7 to 10, Lys21, Gln72, and 77 to 78 contribute to the UDP-N-acetyl-alpha-D-glucosamine site; these read LAAG and GT. Position 102 (Asp102) interacts with Mg(2+). 4 residues coordinate UDP-N-acetyl-alpha-D-glucosamine: Gly139, Glu154, Asn169, and Asn223. Position 223 (Asn223) interacts with Mg(2+). The tract at residues 226-246 is linker; the sequence is LQLATAYEILQRRVKEQWMMA. Positions 247-451 are N-acetyltransferase; sequence GVTLIDPNSI…LGWRRKSGES (205 aa). UDP-N-acetyl-alpha-D-glucosamine contacts are provided by Arg328 and Lys346. The Proton acceptor role is filled by His358. Tyr361 and Asn372 together coordinate UDP-N-acetyl-alpha-D-glucosamine. Acetyl-CoA-binding positions include Ala375, 381 to 382, Ser400, Ala418, and Arg435; that span reads NY.

The protein in the N-terminal section; belongs to the N-acetylglucosamine-1-phosphate uridyltransferase family. It in the C-terminal section; belongs to the transferase hexapeptide repeat family. As to quaternary structure, homotrimer. Mg(2+) serves as cofactor.

It is found in the cytoplasm. The catalysed reaction is alpha-D-glucosamine 1-phosphate + acetyl-CoA = N-acetyl-alpha-D-glucosamine 1-phosphate + CoA + H(+). It carries out the reaction N-acetyl-alpha-D-glucosamine 1-phosphate + UTP + H(+) = UDP-N-acetyl-alpha-D-glucosamine + diphosphate. It participates in nucleotide-sugar biosynthesis; UDP-N-acetyl-alpha-D-glucosamine biosynthesis; N-acetyl-alpha-D-glucosamine 1-phosphate from alpha-D-glucosamine 6-phosphate (route II): step 2/2. The protein operates within nucleotide-sugar biosynthesis; UDP-N-acetyl-alpha-D-glucosamine biosynthesis; UDP-N-acetyl-alpha-D-glucosamine from N-acetyl-alpha-D-glucosamine 1-phosphate: step 1/1. It functions in the pathway bacterial outer membrane biogenesis; LPS lipid A biosynthesis. Functionally, catalyzes the last two sequential reactions in the de novo biosynthetic pathway for UDP-N-acetylglucosamine (UDP-GlcNAc). The C-terminal domain catalyzes the transfer of acetyl group from acetyl coenzyme A to glucosamine-1-phosphate (GlcN-1-P) to produce N-acetylglucosamine-1-phosphate (GlcNAc-1-P), which is converted into UDP-GlcNAc by the transfer of uridine 5-monophosphate (from uridine 5-triphosphate), a reaction catalyzed by the N-terminal domain. The polypeptide is Bifunctional protein GlmU (Nostoc sp. (strain PCC 7120 / SAG 25.82 / UTEX 2576)).